A 433-amino-acid polypeptide reads, in one-letter code: 23S rRNA (uracil(1939)-C(5))-methyltransferase RlmD (433 aa).

The 59-residue stretch at 10–68 (RTTTRQIITVSVNDLDSFGQGVARHNGKTLFIPGLLSQENAEVTVTEDKKQYARAKVVR) folds into the TRAM domain. Residues Cys-81, Cys-87, Cys-90, and Cys-162 each coordinate [4Fe-4S] cluster. 6 residues coordinate S-adenosyl-L-methionine: Gln-265, Phe-294, Asn-299, Glu-315, Asn-342, and Asp-363. Cys-389 functions as the Nucleophile in the catalytic mechanism.

The protein belongs to the class I-like SAM-binding methyltransferase superfamily. RNA M5U methyltransferase family. RlmD subfamily.

It catalyses the reaction uridine(1939) in 23S rRNA + S-adenosyl-L-methionine = 5-methyluridine(1939) in 23S rRNA + S-adenosyl-L-homocysteine + H(+). Its function is as follows. Catalyzes the formation of 5-methyl-uridine at position 1939 (m5U1939) in 23S rRNA. The polypeptide is 23S rRNA (uracil(1939)-C(5))-methyltransferase RlmD (Shigella dysenteriae serotype 1 (strain Sd197)).